A 485-amino-acid chain; its full sequence is Calcium/manganese antiporter SLC30A10 (485 aa).

Over 1 to 10 (MGRYSGKTCR) the chain is Cytoplasmic. Residues 11–31 (LLFMLVLTVAFFVAELVSGYL) form a helical membrane-spanning segment. At 32 to 40 (GNSIALLSD) the chain is on the extracellular side. The chain crosses the membrane as a helical span at residues 41-61 (SFNMLSDLISLCVGLSAGYIA). Residues 62-81 (RRPTRGFSATYGYARAEVVG) lie on the Cytoplasmic side of the membrane. Residues 82 to 102 (ALSNAVFLTALCFTIFVEAVL) traverse the membrane as a helical segment. The Extracellular segment spans residues 103–113 (RLARPERIDDP). The chain crosses the membrane as a helical span at residues 114–134 (ELVLIVGVLGLLVNVVGLLIF). Over 135 to 244 (QDCAAWFACC…ALNIRGVLLH (110 aa)) the chain is Cytoplasmic. A disordered region spans residues 167–196 (FGGPQGAEDPRRAADPTAPGSDSAVTLRGT). Residues 245–265 (VMGDALGSVVVVITAIIFYVL) traverse the membrane as a helical segment. Residues 266–278 (PLKSEDPCNWQCY) lie on the Extracellular side of the membrane. The helical transmembrane segment at 279–299 (IDPSLTVLMVIIILSSAFPLI) threads the bilayer. The Cytoplasmic portion of the chain corresponds to 300-485 (KETAAILLQM…DQCYVNRTHF (186 aa)). The tract at residues 308-485 (QMVPKGVNME…DQCYVNRTHF (178 aa)) is required for plasma membrane localization.

The protein belongs to the cation diffusion facilitator (CDF) transporter (TC 2.A.4) family. SLC30A subfamily. Forms homodimers. Forms heterodimers and high-molecular weight oligomers with SLC30A3, SLC30A2 and SLC30A4; heterodimerization is mediated by covalent-bound tyrosine residues, occurs probably in a tissue-specific manner and could mediate the intracellular zinc transport activity into early endosomes and recycling endosomes. As to expression, specifically expressed in fetal liver and fetal brain. Expressed in adult tissues with relative levels small intestine &gt; liver &gt; testes &gt; brain &gt; ovary &gt; colon &gt; cervix &gt; prostate &gt; placenta. Expressed in liver and neurons of the nervous system (at protein level).

It is found in the cell membrane. It localises to the golgi apparatus membrane. The protein localises to the recycling endosome membrane. Its subcellular location is the early endosome membrane. The catalysed reaction is Mn(2+)(out) + Ca(2+)(in) = Mn(2+)(in) + Ca(2+)(out). It catalyses the reaction Zn(2+)(in) = Zn(2+)(out). In terms of biological role, calcium:manganese antiporter of the plasma membrane mediating the efflux of intracellular manganese coupled to an active extracellular calcium exchange. Required for intracellular manganese homeostasis, an essential cation for the function of several enzymes, including some crucially important for the metabolism of neurotransmitters and other neuronal metabolic pathways. Manganese can also be cytotoxic and induce oxidative stress, mitochondrial dysfunction and apoptosis. Could also have an intracellular zinc ion transporter activity, directly regulating intracellular zinc ion homeostasis and more indirectly various signaling pathway and biological processes. The protein is Calcium/manganese antiporter SLC30A10 of Homo sapiens (Human).